We begin with the raw amino-acid sequence, 432 residues long: Serine hydroxymethyltransferase (432 aa).

Residues L127 and 131 to 133 (GHL) contribute to the (6S)-5,6,7,8-tetrahydrofolate site. K236 is subject to N6-(pyridoxal phosphate)lysine.

Belongs to the SHMT family. In terms of assembly, homodimer. Pyridoxal 5'-phosphate serves as cofactor.

The protein localises to the cytoplasm. It carries out the reaction (6R)-5,10-methylene-5,6,7,8-tetrahydrofolate + glycine + H2O = (6S)-5,6,7,8-tetrahydrofolate + L-serine. It functions in the pathway one-carbon metabolism; tetrahydrofolate interconversion. Its pathway is amino-acid biosynthesis; glycine biosynthesis; glycine from L-serine: step 1/1. Its function is as follows. Catalyzes the reversible interconversion of serine and glycine with tetrahydrofolate (THF) serving as the one-carbon carrier. This reaction serves as the major source of one-carbon groups required for the biosynthesis of purines, thymidylate, methionine, and other important biomolecules. Also exhibits THF-independent aldolase activity toward beta-hydroxyamino acids, producing glycine and aldehydes, via a retro-aldol mechanism. The chain is Serine hydroxymethyltransferase from Rhizobium johnstonii (strain DSM 114642 / LMG 32736 / 3841) (Rhizobium leguminosarum bv. viciae).